The following is a 79-amino-acid chain: UPF0154 protein SUB0399 (79 aa).

Residues alanine 4 to isoleucine 24 traverse the membrane as a helical segment.

It belongs to the UPF0154 family.

It localises to the cell membrane. In Streptococcus uberis (strain ATCC BAA-854 / 0140J), this protein is UPF0154 protein SUB0399.